A 211-amino-acid polypeptide reads, in one-letter code: N,O-diacetylmuramidase (211 aa).

Active-site residues include D6 and E100. The cysteines at positions 108 and 147 are disulfide-linked.

This sequence belongs to the glycosyl hydrolase 25 family.

Its subcellular location is the secreted. The protein resides in the extracellular space. The catalysed reaction is Hydrolysis of (1-&gt;4)-beta-linkages between N-acetylmuramic acid and N-acetyl-D-glucosamine residues in a peptidoglycan and between N-acetyl-D-glucosamine residues in chitodextrins.. Its function is as follows. This enzyme has both lysozyme (acetylmuramidase) and diacetylmuramidase activities. This Chalaropsis sp protein is N,O-diacetylmuramidase.